We begin with the raw amino-acid sequence, 221 residues long: FMN-dependent NADH:quinone oxidoreductase 1 (221 aa).

Residues 17 to 19 and 148 to 151 each bind FMN; these read SAS and SSGG.

It belongs to the azoreductase type 1 family. As to quaternary structure, homodimer. FMN is required as a cofactor.

It carries out the reaction 2 a quinone + NADH + H(+) = 2 a 1,4-benzosemiquinone + NAD(+). The catalysed reaction is N,N-dimethyl-1,4-phenylenediamine + anthranilate + 2 NAD(+) = 2-(4-dimethylaminophenyl)diazenylbenzoate + 2 NADH + 2 H(+). Quinone reductase that provides resistance to thiol-specific stress caused by electrophilic quinones. Functionally, also exhibits azoreductase activity. Catalyzes the reductive cleavage of the azo bond in aromatic azo compounds to the corresponding amines. The protein is FMN-dependent NADH:quinone oxidoreductase 1 of Clostridium acetobutylicum (strain ATCC 824 / DSM 792 / JCM 1419 / IAM 19013 / LMG 5710 / NBRC 13948 / NRRL B-527 / VKM B-1787 / 2291 / W).